The primary structure comprises 560 residues: Arginine--tRNA ligase (560 aa).

The short motif at 122–132 is the 'HIGH' region element; it reads ANPNGPLHVGH.

Belongs to the class-I aminoacyl-tRNA synthetase family.

It localises to the cytoplasm. The catalysed reaction is tRNA(Arg) + L-arginine + ATP = L-arginyl-tRNA(Arg) + AMP + diphosphate. The sequence is that of Arginine--tRNA ligase from Methanosphaera stadtmanae (strain ATCC 43021 / DSM 3091 / JCM 11832 / MCB-3).